The sequence spans 932 residues: Glycine dehydrogenase (decarboxylating) (932 aa).

Lys685 is subject to N6-(pyridoxal phosphate)lysine.

It belongs to the GcvP family. In terms of assembly, the glycine cleavage system is composed of four proteins: P, T, L and H. Pyridoxal 5'-phosphate serves as cofactor.

The catalysed reaction is N(6)-[(R)-lipoyl]-L-lysyl-[glycine-cleavage complex H protein] + glycine + H(+) = N(6)-[(R)-S(8)-aminomethyldihydrolipoyl]-L-lysyl-[glycine-cleavage complex H protein] + CO2. In terms of biological role, the glycine cleavage system catalyzes the degradation of glycine. The P protein binds the alpha-amino group of glycine through its pyridoxal phosphate cofactor; CO(2) is released and the remaining methylamine moiety is then transferred to the lipoamide cofactor of the H protein. The polypeptide is Glycine dehydrogenase (decarboxylating) (Brucella suis (strain ATCC 23445 / NCTC 10510)).